The chain runs to 308 residues: tRNA dimethylallyltransferase (308 aa).

8-15 (GATAVGKT) is a binding site for ATP. Residue 10–15 (TAVGKT) participates in substrate binding. The interval 33–36 (DSRQ) is interaction with substrate tRNA.

It belongs to the IPP transferase family. In terms of assembly, monomer. Mg(2+) serves as cofactor.

The enzyme catalyses adenosine(37) in tRNA + dimethylallyl diphosphate = N(6)-dimethylallyladenosine(37) in tRNA + diphosphate. Catalyzes the transfer of a dimethylallyl group onto the adenine at position 37 in tRNAs that read codons beginning with uridine, leading to the formation of N6-(dimethylallyl)adenosine (i(6)A). This is tRNA dimethylallyltransferase from Kosmotoga olearia (strain ATCC BAA-1733 / DSM 21960 / TBF 19.5.1).